Here is a 228-residue protein sequence, read N- to C-terminus: Probable endonuclease LCL3 (228 aa).

A helical membrane pass occupies residues Leu13–Tyr30. Residues Arg52–Leu210 enclose the TNase-like domain. Arg101 is an active-site residue. Asp106 is a binding site for Ca(2+). Active-site residues include Glu109 and Arg149.

The protein belongs to the LCL3 family.

The protein localises to the mitochondrion. It is found in the membrane. The sequence is that of Probable endonuclease LCL3 (LCL3) from Meyerozyma guilliermondii (strain ATCC 6260 / CBS 566 / DSM 6381 / JCM 1539 / NBRC 10279 / NRRL Y-324) (Yeast).